Consider the following 61-residue polypeptide: Sec-independent protein translocase protein TatA (61 aa).

Residues 1–21 (MFSNIGFPGLILILVAVLILF) form a helical membrane-spanning segment.

It belongs to the TatA/E family. In terms of assembly, forms a complex with TatC.

It localises to the cell membrane. Part of the twin-arginine translocation (Tat) system that transports large folded proteins containing a characteristic twin-arginine motif in their signal peptide across membranes. TatA could form the protein-conducting channel of the Tat system. This Bacillus anthracis (strain A0248) protein is Sec-independent protein translocase protein TatA.